The primary structure comprises 265 residues: tRNA pseudouridine synthase A (265 aa).

The active-site Nucleophile is the Asp-58. Tyr-116 lines the substrate pocket.

It belongs to the tRNA pseudouridine synthase TruA family. Homodimer.

The catalysed reaction is uridine(38/39/40) in tRNA = pseudouridine(38/39/40) in tRNA. In terms of biological role, formation of pseudouridine at positions 38, 39 and 40 in the anticodon stem and loop of transfer RNAs. The protein is tRNA pseudouridine synthase A of Neisseria meningitidis serogroup C (strain 053442).